A 200-amino-acid polypeptide reads, in one-letter code: UPF0637 protein LCABL_14170 (200 aa).

Belongs to the UPF0637 family.

This Lacticaseibacillus casei (strain BL23) (Lactobacillus casei) protein is UPF0637 protein LCABL_14170.